Reading from the N-terminus, the 636-residue chain is Golgin subfamily A member 8F (636 aa).

2 disordered regions span residues 1–72 (MAEE…SATL) and 107–127 (NKQV…KQKA). The span at 38–50 (TNGSIHETATSGG) shows a compositional bias: polar residues. Coiled-coil stretches lie at residues 93–148 (VSQL…LNTD), 211–263 (LEQS…MSQE), and 306–412 (EVEL…QQKQ). The span at 109–127 (QVEHQLEEEKKANNEKQKA) shows a compositional bias: basic and acidic residues. Disordered regions lie at residues 344–364 (LREQ…QEER), 422–449 (ALPG…SIPQ), 496–537 (PITK…GVAA), and 588–612 (PVQG…QDHQ). Residues 429–441 (GGGHLDSEGEEAP) are compositionally biased toward basic and acidic residues. Residues 509 to 522 (PGGGHHQAGPGQGG) show a composition bias toward gly residues.

It belongs to the GOLGA8 family.

The chain is Golgin subfamily A member 8F from Homo sapiens (Human).